The following is a 400-amino-acid chain: MISEPFLKASPILTTLISNGYEGYFVGGCVRDLLLQKDIHDIDIATSATPNEVMHLFKKVIPVGIEHGTVIVRHGGESYEVTTYRQDGEYTDHRRPNDVRFVTNLAEDLRRRDFTINALAMDTSGQITDLFHGQDDLKKKLIRTVGNAEERFTEDALRILRAVRFSSQLGCTIQEDTLEAMFVIRKQIQHLAVERITIELTKLFQGQHVSKAIQYIIDLQLDEQLPIFQSGKSDIFKAMKENITPLHSFSEVIAVFHLLDPTIKIHDWIKNYKCSNHVKNDTIQLINAYHYYQSHGINNWLLYILPTKLWDGFIRLIYVIDRTTIERKQLEEITATLPIDKRSQLHLDGNDLMNWFPHRPKGKWIKILLEEVEYLVVSKQLPNEKKIIKEWVLCNQPDPN.

The ATP site is built by Gly28 and Arg31. CTP contacts are provided by Gly28 and Arg31. Mg(2+) is bound by residues Asp41 and Asp43. Residues Arg112, Asp155, Arg158, Arg161, and Arg164 each contribute to the ATP site. Residues Arg112, Asp155, Arg158, Arg161, and Arg164 each contribute to the CTP site.

Belongs to the tRNA nucleotidyltransferase/poly(A) polymerase family. Bacterial CCA-adding enzyme type 3 subfamily. Homodimer. Requires Mg(2+) as cofactor.

The enzyme catalyses a tRNA precursor + 2 CTP + ATP = a tRNA with a 3' CCA end + 3 diphosphate. It carries out the reaction a tRNA with a 3' CCA end + 2 CTP + ATP = a tRNA with a 3' CCACCA end + 3 diphosphate. Catalyzes the addition and repair of the essential 3'-terminal CCA sequence in tRNAs without using a nucleic acid template. Adds these three nucleotides in the order of C, C, and A to the tRNA nucleotide-73, using CTP and ATP as substrates and producing inorganic pyrophosphate. tRNA 3'-terminal CCA addition is required both for tRNA processing and repair. Also involved in tRNA surveillance by mediating tandem CCA addition to generate a CCACCA at the 3' terminus of unstable tRNAs. While stable tRNAs receive only 3'-terminal CCA, unstable tRNAs are marked with CCACCA and rapidly degraded. This is CCA-adding enzyme from Oceanobacillus iheyensis (strain DSM 14371 / CIP 107618 / JCM 11309 / KCTC 3954 / HTE831).